The chain runs to 687 residues: Glycine--tRNA ligase beta subunit (687 aa).

Belongs to the class-II aminoacyl-tRNA synthetase family. In terms of assembly, tetramer of two alpha and two beta subunits.

The protein resides in the cytoplasm. The enzyme catalyses tRNA(Gly) + glycine + ATP = glycyl-tRNA(Gly) + AMP + diphosphate. This chain is Glycine--tRNA ligase beta subunit, found in Lactobacillus helveticus (strain DPC 4571).